We begin with the raw amino-acid sequence, 226 residues long: Triosephosphate isomerase (226 aa).

A substrate-binding site is contributed by 13–15; sequence NFK. The active-site Electrophile is the His97. The active-site Proton acceptor is Glu145. Substrate contacts are provided by residues Ile150, Gly185, and 206-207; that span reads AS.

Belongs to the triosephosphate isomerase family. As to quaternary structure, homotetramer; dimer of dimers.

The protein localises to the cytoplasm. It carries out the reaction D-glyceraldehyde 3-phosphate = dihydroxyacetone phosphate. The protein operates within carbohydrate biosynthesis; gluconeogenesis. It participates in carbohydrate degradation; glycolysis; D-glyceraldehyde 3-phosphate from glycerone phosphate: step 1/1. Functionally, involved in the gluconeogenesis. Catalyzes stereospecifically the conversion of dihydroxyacetone phosphate (DHAP) to D-glyceraldehyde-3-phosphate (G3P). This chain is Triosephosphate isomerase, found in Methanobacterium bryantii.